Here is a 428-residue protein sequence, read N- to C-terminus: Tyrosine--tRNA ligase (428 aa).

Y37 contributes to the L-tyrosine binding site. A 'HIGH' region motif is present at residues 42-51 (PTGSSLHAGH). The L-tyrosine site is built by Y175 and Q179. Positions 235-239 (KFGKS) match the 'KMSKS' region motif. K238 serves as a coordination point for ATP. One can recognise an S4 RNA-binding domain in the interval 358-415 (ATILDLLVESGLEKSKGAARRTVGEGGAYVNNQRIEDIEWSPSAEELLHGSWLVLRKG).

It belongs to the class-I aminoacyl-tRNA synthetase family. TyrS type 1 subfamily. As to quaternary structure, homodimer.

The protein localises to the cytoplasm. It carries out the reaction tRNA(Tyr) + L-tyrosine + ATP = L-tyrosyl-tRNA(Tyr) + AMP + diphosphate + H(+). Catalyzes the attachment of tyrosine to tRNA(Tyr) in a two-step reaction: tyrosine is first activated by ATP to form Tyr-AMP and then transferred to the acceptor end of tRNA(Tyr). The chain is Tyrosine--tRNA ligase from Corynebacterium jeikeium (strain K411).